The sequence spans 214 residues: Ras-related protein Rab-17 (214 aa).

A Phosphoserine modification is found at S29. Residues G31, K32, T33, and T50 each coordinate GTP. Mg(2+) contacts are provided by T33, T50, and D73. Residues 43 to 54 (DFSNVLPTVGCA) carry the Switch 1 motif. A Switch 2 motif is present at residues 75–91 (AGQEKYQSVCHLYFRGA). The GTP site is built by G76, N132, K133, D135, and A163. A disordered region spans residues 183 to 204 (RAGDTGSSRPQEGEAVALNQEP). 2 S-geranylgeranyl cysteine lipidation sites follow: C211 and C212.

Belongs to the small GTPase superfamily. Rab family. Mg(2+) is required as a cofactor. Expressed in kidney, liver, and intestine mainly by epithelial cells. Expressed in hippocampus (at protein level).

The protein resides in the recycling endosome membrane. The protein localises to the melanosome. It is found in the cell projection. It localises to the dendrite. The enzyme catalyses GTP + H2O = GDP + phosphate + H(+). Its activity is regulated as follows. Regulated by guanine nucleotide exchange factors (GEFs) which promote the exchange of bound GDP for free GTP. Regulated by GTPase activating proteins (GAPs) which increase the GTP hydrolysis activity. Inhibited by GDP dissociation inhibitors (GDIs). Its function is as follows. The small GTPases Rab are key regulators of intracellular membrane trafficking, from the formation of transport vesicles to their fusion with membranes. Rabs cycle between an inactive GDP-bound form and an active GTP-bound form that is able to recruit to membranes different set of downstream effectors directly responsible for vesicle formation, movement, tethering and fusion. RAB17 is involved in transcytosis, the directed movement of endocytosed material through the cell and its exocytosis from the plasma membrane at the opposite side. Mainly observed in epithelial cells, transcytosis mediates, for instance, the transcellular transport of immunoglobulins from the basolateral surface to the apical surface. Most probably controls membrane trafficking through apical recycling endosomes in a post-endocytic step of transcytosis. Required for melanosome transport and release from melanocytes, it also regulates dendrite and dendritic spine development. May also play a role in cell migration. The polypeptide is Ras-related protein Rab-17 (Mus musculus (Mouse)).